The chain runs to 132 residues: Small ribosomal subunit protein uS8 (132 aa).

The protein belongs to the universal ribosomal protein uS8 family. Part of the 30S ribosomal subunit. Contacts proteins S5 and S12.

Its function is as follows. One of the primary rRNA binding proteins, it binds directly to 16S rRNA central domain where it helps coordinate assembly of the platform of the 30S subunit. This is Small ribosomal subunit protein uS8 from Clostridium beijerinckii (strain ATCC 51743 / NCIMB 8052) (Clostridium acetobutylicum).